Here is a 78-residue protein sequence, read N- to C-terminus: DNA gyrase inhibitor YacG (78 aa).

Zn(2+)-binding residues include C7, C10, C26, and C30.

This sequence belongs to the DNA gyrase inhibitor YacG family. As to quaternary structure, interacts with GyrB. Zn(2+) is required as a cofactor.

Inhibits all the catalytic activities of DNA gyrase by preventing its interaction with DNA. Acts by binding directly to the C-terminal domain of GyrB, which probably disrupts DNA binding by the gyrase. The protein is DNA gyrase inhibitor YacG of Shewanella piezotolerans (strain WP3 / JCM 13877).